The primary structure comprises 278 residues: Sulfur carrier protein FdhD (278 aa).

Cys117 acts as the Cysteine persulfide intermediate in catalysis.

Belongs to the FdhD family.

It localises to the cytoplasm. Its function is as follows. Required for formate dehydrogenase (FDH) activity. Acts as a sulfur carrier protein that transfers sulfur from IscS to the molybdenum cofactor prior to its insertion into FDH. The sequence is that of Sulfur carrier protein FdhD from Variovorax paradoxus (strain S110).